Reading from the N-terminus, the 131-residue chain is D-ribose pyranase (131 aa).

The active-site Proton donor is the H20. Substrate-binding positions include D28, H98, and 120 to 122 (YAN).

It belongs to the RbsD / FucU family. RbsD subfamily. In terms of assembly, homodecamer.

The protein resides in the cytoplasm. The enzyme catalyses beta-D-ribopyranose = beta-D-ribofuranose. It participates in carbohydrate metabolism; D-ribose degradation; D-ribose 5-phosphate from beta-D-ribopyranose: step 1/2. In terms of biological role, catalyzes the interconversion of beta-pyran and beta-furan forms of D-ribose. The polypeptide is D-ribose pyranase (Clostridium perfringens (strain SM101 / Type A)).